The following is a 218-amino-acid chain: Flagellar calcium-binding protein TB-24 (218 aa).

Residues M1 to T27 form a disordered region. 4 consecutive EF-hand domains span residues E48–L83, D84–F119, Y130–W165, and V167–Q202. Residues D61, N63, T65, K67, and E72 each coordinate Ca(2+). Ca(2+) is bound by residues D143, D145, S147, E154, D180, N182, S184, and E191.

Belongs to the calflagin family.

It localises to the cell projection. The protein localises to the cilium. Its subcellular location is the flagellum. Its function is as follows. May contribute to the rapid motility of the trypanosomes, playing a role either in flagellar structure or in calcium metabolism. Could alternate between a GDP-bound inactive form to a calcium/GTP-bound active form. The polypeptide is Flagellar calcium-binding protein TB-24 (Trypanosoma brucei brucei).